A 330-amino-acid polypeptide reads, in one-letter code: Probable xanthine dehydrogenase subunit A (330 aa).

Could be composed of four subunits: PucA, PucC, PucD and PucE.

It carries out the reaction xanthine + NAD(+) + H2O = urate + NADH + H(+). The catalysed reaction is hypoxanthine + NAD(+) + H2O = xanthine + NADH + H(+). It participates in purine metabolism; hypoxanthine degradation; urate from hypoxanthine: step 1/2. It functions in the pathway purine metabolism; hypoxanthine degradation; urate from hypoxanthine: step 2/2. Functionally, oxidizes hypoxanthine and xanthine to uric acid. PucA subunit could exert a molybdenum cofactor recruiting function. The sequence is that of Probable xanthine dehydrogenase subunit A (pucA) from Bacillus subtilis (strain 168).